Consider the following 409-residue polypeptide: Spermatogenesis-associated protein 2-like protein (409 aa).

Disordered regions lie at residues 233-257, 270-299, and 313-337; these read EDEG…TSEL, LWGA…PQPE, and RPGD…IPEP.

This sequence belongs to the SPATA2 family.

The protein is Spermatogenesis-associated protein 2-like protein (SPATA2L) of Bos taurus (Bovine).